The sequence spans 36 residues: MEIKVQRLSLWMINTVFLLSPINNHQTNTINLIFEM.

The sequence is that of Protein YmgL from Escherichia coli (strain K12).